Reading from the N-terminus, the 318-residue chain is Transcription factor FER-LIKE IRON DEFICIENCY-INDUCED TRANSCRIPTION FACTOR (318 aa).

The segment at 90 to 138 is disordered; it reads FDGDSVRAGGEEDEEDYNDGDDSSATTTNNDGTRKTKTDRSRTLISERR. Residues 100–111 are compositionally biased toward acidic residues; sequence EEDEEDYNDGDD. Residues 121–136 are compositionally biased toward basic and acidic residues; the sequence is GTRKTKTDRSRTLISE. Positions 127 to 176 constitute a bHLH domain; sequence TDRSRTLISERRRRGRMKDKLYALRSLVPNITKMDKASIVGDAVLYVQEL.

Homodimer. As to expression, expressed in roots and inflorescence, and to a lower extent, in leaves and stems. In roots, confined to the outer cell layers, specifically in the differentiation zone. Also detected in the endodermis and inner tissues of the central cylinder.

The protein localises to the nucleus. Functionally, transcription factor. Essential protein involved in iron uptake responses. Regulates FRO2 at the level of mRNA accumulation and IRT1 at the level of protein accumulation. Confers enhanced iron mobilization responses at low iron supply. The sequence is that of Transcription factor FER-LIKE IRON DEFICIENCY-INDUCED TRANSCRIPTION FACTOR (FIT) from Arabidopsis thaliana (Mouse-ear cress).